A 674-amino-acid chain; its full sequence is Sterile alpha motif domain-containing protein 15 (674 aa).

The segment covering Met1–Leu18 has biased composition (acidic residues). Residues Met1–Lys448 are disordered. Composition is skewed to basic and acidic residues over residues Ile87–Lys142, Glu195–Glu223, and Thr236–Glu274. Over residues Ala276 to Glu290 the composition is skewed to acidic residues. Composition is skewed to basic and acidic residues over residues Glu291 to Asp322, Glu330 to Glu346, Glu354 to Asn372, and Val391 to Lys429. An SAM domain is found at Trp545–Ile608.

The chain is Sterile alpha motif domain-containing protein 15 (SAMD15) from Homo sapiens (Human).